The primary structure comprises 91 residues: Small ribosomal subunit protein bS18 (91 aa).

Belongs to the bacterial ribosomal protein bS18 family. In terms of assembly, part of the 30S ribosomal subunit. Forms a tight heterodimer with protein bS6.

Its function is as follows. Binds as a heterodimer with protein bS6 to the central domain of the 16S rRNA, where it helps stabilize the platform of the 30S subunit. The sequence is that of Small ribosomal subunit protein bS18 from Gluconacetobacter diazotrophicus (strain ATCC 49037 / DSM 5601 / CCUG 37298 / CIP 103539 / LMG 7603 / PAl5).